A 247-amino-acid polypeptide reads, in one-letter code: Fibroblast growth factor 14 (247 aa).

Disordered stretches follow at residues 1–38 (MAAA…KNRG) and 216–247 (ETVP…CKTT). Over residues 15–25 (QAREQHWDRPS) the composition is skewed to basic and acidic residues.

The protein belongs to the heparin-binding growth factors family. Interacts with SCN8A.

Its subcellular location is the nucleus. Functionally, probably involved in nervous system development and function. This is Fibroblast growth factor 14 (Fgf14) from Rattus norvegicus (Rat).